The following is a 942-amino-acid chain: MDAGASYMRLTGEENWVEVTMDEEKERKGKDVQQGKYRPQVSKPIINRDTNTSFAYKGIFLWGIQITMWILLWTNMCVRAEDYITLISDPYGFSPIKNVSGVPVTCVTKEFARWGCQPLGAYPDPEIEYRNVSQEIVKEVYQENWPWNTYHWPLWQMENVRYWLKENIAENKKRKNSTKKGIEELLAGTIRGRFCVPYPFALLKCTKWCWYPAEIDQETGRARKIKINCTEARAVSCTEEMPLASIHRAYWDEKDRESMAFMNIRACDSNLRCQKRPGGCVEGYPIPVGANIIPENMKYLRGQKSQYGGIKDKNGELKLPLTVRVWVKLANVSTWVNGTPPYWQNRINGSKGINGTLWGQLSGMHHLGFNLSQTGKWCNYTGKIKIGQETFSYHYKPNWNCTGNWTQHPVWQVMRDLDMVEHMTGECVQRPQRHNITVDRNQTITGNCSVTNWDGCNCSRSGNYLYNSTTGGLLVIICRNNNTITGIMGTNTNWTTMWRIYRNCSGCENATLDRKETGTLGGVANKNCSLPHKNESNKWTCAPRQREGKTDSLYIAGGKKFWTREKAQYSCENNIGELDGMLHQQILLQKYQVIKVRAYTYGVIEMPENYAKTRIINRRKRELSHTRKKRGVGLVIMLVIMAIVAAAGASLGVANAIQQSYTKAAVQTLANATAAQQDALEATYAMVQHVAKGVRILEARVARVEAITDRIMLYQELDCWHYHQYCVTSTRADVAKYINWTRFKDNCTWQQWERELQGYDGNLTMLLRESARQTQLAEEQVRRIPDVWESLKEVFDWSGWFSWLKYIPIIVVGLVGCILIRAVICVCQPLVQIYRTLSTPTYQRVTVIMEKRADVAGENQDFGDGLEESDDSKTDQKVTVQKAWSRAWELWQNSPWKEPWKRSLLKLLILPLTMGIWINGRLGEHLKNKKERVDCETWGKGD.

A signal peptide spans 1 to 80 (MDAGASYMRL…LLWTNMCVRA (80 aa)). N-linked (GlcNAc...) asparagine; by host glycosylation is found at Asn51, Asn98, Asn131, Asn176, Asn228, Asn331, Asn348, Asn354, Asn370, Asn379, Asn400, Asn404, Asn435, Asn441, Asn447, Asn457, Asn467, Asn481, Asn493, Asn503, Asn509, Asn527, and Asn534. Topologically, residues 81-799 (EDYITLISDP…SLKEVFDWSG (719 aa)) are extracellular. The interval 631-651 (GVGLVIMLVIMAIVAAAGASL) is fusion peptide. Coiled coils occupy residues 663–713 (KAAV…RIML) and 754–789 (RELQ…DVWE). Residues 697–713 (LEARVARVEAITDRIML) are immunosuppression. Residues 800–820 (WFSWLKYIPIIVVGLVGCILI) form a helical membrane-spanning segment. Topologically, residues 821-942 (RAVICVCQPL…VDCETWGKGD (122 aa)) are cytoplasmic.

The mature envelope protein (Env) consists of a trimer of SU-TM heterodimers attached by noncovalent interactions or by a labile interchain disulfide bond. Post-translationally, specific enzymatic cleavages in vivo yield mature proteins. Envelope glycoproteins are synthesized as an inactive precursor that is N-glycosylated and processed likely by host cell furin or by a furin-like protease in the Golgi to yield the mature SU and TM proteins. The cleavage site between SU and TM requires the minimal sequence [KR]-X-[KR]-R.

The protein resides in the virion membrane. It is found in the host cell membrane. Its function is as follows. The surface protein (SU) attaches the virus to the host cell by binding to its receptor. This interaction triggers the refolding of the transmembrane protein (TM) and is thought to activate its fusogenic potential by unmasking its fusion peptide. Fusion occurs at the host cell plasma membrane. Functionally, the transmembrane protein (TM) acts as a class I viral fusion protein. Under the current model, the protein has at least 3 conformational states: pre-fusion native state, pre-hairpin intermediate state, and post-fusion hairpin state. During viral and target cell membrane fusion, the coiled coil regions (heptad repeats) assume a trimer-of-hairpins structure, positioning the fusion peptide in close proximity to the C-terminal region of the ectodomain. The formation of this structure appears to drive apposition and subsequent fusion of viral and target cell membranes. Membranes fusion leads to delivery of the nucleocapsid into the cytoplasm. This chain is Envelope glycoprotein (env), found in Caprine arthritis encephalitis virus (strain 63) (CAEV-63).